Consider the following 295-residue polypeptide: 33 kDa chaperonin (295 aa).

2 disulfide bridges follow: Cys233-Cys235 and Cys267-Cys270.

This sequence belongs to the HSP33 family. Post-translationally, under oxidizing conditions two disulfide bonds are formed involving the reactive cysteines. Under reducing conditions zinc is bound to the reactive cysteines and the protein is inactive.

Its subcellular location is the cytoplasm. In terms of biological role, redox regulated molecular chaperone. Protects both thermally unfolding and oxidatively damaged proteins from irreversible aggregation. Plays an important role in the bacterial defense system toward oxidative stress. The chain is 33 kDa chaperonin from Mannheimia succiniciproducens (strain KCTC 0769BP / MBEL55E).